An 84-amino-acid polypeptide reads, in one-letter code: U-actitoxin-Avd8e (84 aa).

The signal sequence occupies residues 1–22 (MASARTLVLLLIGAVLMCQVSA). A propeptide spanning residues 23-41 (DSELLNEILAAHMEEDMPE) is cleaved from the precursor. One can recognise a ShKT domain in the interval 44-84 (CIDRYRSNICGSVIRPLDCTRRKSRMGRFARTNCKKLCGFC). Disulfide bonds link Cys44-Cys84, Cys53-Cys77, and Cys62-Cys81.

The protein belongs to the sea anemone 8 toxin family.

Its subcellular location is the secreted. The protein resides in the nematocyst. In Anemonia viridis (Snakelocks anemone), this protein is U-actitoxin-Avd8e.